Reading from the N-terminus, the 507-residue chain is Cytochrome P450 monooxygenase cloA (507 aa).

Residues 15 to 35 form a helical membrane-spanning segment; it reads WTWILLTTCIALISPLVLKGI. N247 is a glycosylation site (N-linked (GlcNAc...) asparagine). C450 contributes to the heme binding site.

This sequence belongs to the cytochrome P450 family. Requires heme as cofactor.

The protein resides in the membrane. The protein operates within alkaloid biosynthesis; ergot alkaloid biosynthesis. In terms of biological role, cytochrome P450 monooxygenase; part of the gene cluster that mediates the biosynthesis of fungal ergot alkaloid. DmaW catalyzes the first step of ergot alkaloid biosynthesis by condensing dimethylallyl diphosphate (DMAP) and tryptophan to form 4-dimethylallyl-L-tryptophan. The second step is catalyzed by the methyltransferase easF that methylates 4-dimethylallyl-L-tryptophan in the presence of S-adenosyl-L-methionine, resulting in the formation of 4-dimethylallyl-L-abrine. The catalase easC and the FAD-dependent oxidoreductase easE then transform 4-dimethylallyl-L-abrine to chanoclavine-I which is further oxidized by easD in the presence of NAD(+), resulting in the formation of chanoclavine-I aldehyde. Agroclavine dehydrogenase easG then mediates the conversion of chanoclavine-I aldehyde to agroclavine via a non-enzymatic adduct reaction: the substrate is an iminium intermediate that is formed spontaneously from chanoclavine-I aldehyde in the presence of glutathione. The presence of easA is not required to complete this reaction. Further conversion of agroclavine to paspalic acid is a two-step process involving oxidation of agroclavine to elymoclavine and of elymoclavine to paspalic acid, the second step being performed by the elymoclavine oxidase cloA. Paspalic acid is then further converted to D-lysergic acid. Ergopeptines are assembled from D-lysergic acid and three different amino acids by the D-lysergyl-peptide-synthetases composed each of a monomudular and a trimodular nonribosomal peptide synthetase subunit. LpsB and lpsC encode the monomodular subunits responsible for D-lysergic acid activation and incorporation into the ergopeptine backbone. LpsA1 and A2 subunits encode the trimodular nonribosomal peptide synthetase assembling the tripeptide portion of ergopeptines. LpsA1 is responsible for formation of the major ergopeptine, ergotamine, and lpsA2 for alpha-ergocryptine, the minor ergopeptine of the total alkaloid mixture elaborated by C.purpurea. D-lysergyl-tripeptides are assembled by the nonribosomal peptide synthetases and released as N-(D-lysergyl-aminoacyl)-lactams. Cyclolization of the D-lysergyl-tripeptides is performed by the Fe(2+)/2-ketoglutarate-dependent dioxygenase easH which introduces a hydroxyl group into N-(D-lysergyl-aminoacyl)-lactam at alpha-C of the aminoacyl residue followed by spontaneous condensation with the terminal lactam carbonyl group. The protein is Cytochrome P450 monooxygenase cloA of Claviceps purpurea (strain 20.1) (Ergot fungus).